The following is a 734-amino-acid chain: Photosystem I P700 chlorophyll a apoprotein A2 (734 aa).

Helical transmembrane passes span 46–69 (IFASHFGQLAVIFLWTSGNLFHVA), 135–158 (LYQGALFLLGLAAVSLAAGWLHLQ), 175–199 (LNHHLSGLFGVSSLAWSGHLVHVAI), 273–291 (IAHHHLAIAVLFIIAGHQY), 330–353 (LHFQLGLALASLGVITSLVAQHMY), 369–395 (AALYTHHQYIAGFIMSGAFAHGAIFFI), 417–439 (AIISHLSWASLFLGFHTLGLYVH), and 517–535 (FLVHHAIALGLHTTTLILV). 2 residues coordinate [4Fe-4S] cluster: C559 and C568. The next 2 membrane-spanning stretches (helical) occupy residues 575–596 (AFYLAIFWMLNTIGWVTFYWHW) and 643–665 (LSVWAWMFLFGHLIWATGFMFLI). The chlorophyll a site is built by H654, M662, and Y670. Residue W671 participates in phylloquinone binding. Residues 707 to 727 (LVGLAHFSVGYIFTYAAFLIA) form a helical membrane-spanning segment.

Belongs to the PsaA/PsaB family. The PsaA/B heterodimer binds the P700 chlorophyll special pair and subsequent electron acceptors. PSI consists of a core antenna complex that captures photons, and an electron transfer chain that converts photonic excitation into a charge separation. The eukaryotic PSI reaction center is composed of at least 11 subunits. P700 is a chlorophyll a/chlorophyll a' dimer, A0 is one or more chlorophyll a, A1 is one or both phylloquinones and FX is a shared 4Fe-4S iron-sulfur center. is required as a cofactor.

The protein resides in the plastid. Its subcellular location is the chloroplast thylakoid membrane. The catalysed reaction is reduced [plastocyanin] + hnu + oxidized [2Fe-2S]-[ferredoxin] = oxidized [plastocyanin] + reduced [2Fe-2S]-[ferredoxin]. Its function is as follows. PsaA and PsaB bind P700, the primary electron donor of photosystem I (PSI), as well as the electron acceptors A0, A1 and FX. PSI is a plastocyanin-ferredoxin oxidoreductase, converting photonic excitation into a charge separation, which transfers an electron from the donor P700 chlorophyll pair to the spectroscopically characterized acceptors A0, A1, FX, FA and FB in turn. Oxidized P700 is reduced on the lumenal side of the thylakoid membrane by plastocyanin. This chain is Photosystem I P700 chlorophyll a apoprotein A2, found in Chaetosphaeridium globosum (Charophycean green alga).